Reading from the N-terminus, the 589-residue chain is Ubiquilin-1 (589 aa).

Residues 1–11 (MAESGESGGPP) show a composition bias toward gly residues. 2 disordered regions span residues 1–35 (MAES…AEPK) and 110–145 (NRPQ…ATSN). Ala2 is modified (N-acetylalanine). Over residues 12–35 (GSQDSAAGAEGAGAPAAAASAEPK) the composition is skewed to low complexity. A Ubiquitin-like domain is found at 37–111 (MKVTVKTPKE…VHLVIKTQNR (75 aa)). Residues 110–124 (NRPQDHSAQQTNTAG) are compositionally biased toward polar residues. Low complexity predominate over residues 125–145 (SNVTTSSTPNSNSTSGSATSN). The interval 178 to 428 (QLLSNPEMMV…LNNPLFAGNP (251 aa)) is interaction with UBXN4. 2 consecutive STI1 domains span residues 182 to 210 (NPEM…QLIM) and 212 to 251 (NPQM…MQEM). Positions 295 to 371 (PFASLVSNTS…NLVPGVGASM (77 aa)) are disordered. Residues 299–313 (LVSNTSSGEGSQPSR) are compositionally biased toward polar residues. The segment covering 327 to 360 (QTSQSSSASSGTASTVGGTTGSTASGTSGQSTTA) has biased composition (low complexity). STI1 domains lie at 387–434 (NPQL…QEQM) and 438–470 (LPTF…QQGL). Positions 488-520 (LGALGSTGGSSGTNGSNATPSENTSPTAGTTEP) are disordered. The span at 489 to 499 (GALGSTGGSSG) shows a compositional bias: gly residues. A compositionally biased stretch (polar residues) spans 509 to 520 (ENTSPTAGTTEP). The 41-residue stretch at 546 to 586 (RFQQQLEQPSAMGFLNREANLQALIATGGDINAAIERLLGS) folds into the UBA domain.

In terms of assembly, monomer and homodimer. Heterodimer with UBQLN2. Binds CD47, NBL1, GABRA1, GABRA2, GABRA3, GABRA6, GABRB1, GABRB2 and GABRB3. Binds UBE3A, BTRC, P4HB and MTOR. Interacts with the proteasome 19S subunit. Interacts (via ubiquitin-like domain) with TREX1; the interaction is direct and may control TREX1 subcellular location. Forms a complex with UBXN4 and VCP. Interacts (via UBA domain) with UBQLN4 (via ubiquitin-like domain). Found in a complex with UBQLN2 and MAP1LC3A/B/C. The monomeric form interacts with PSEN1 and PSEN2. Interacts with ORAI1. Interacts (via UBA domain) with TICAM1. Interacts with EPS15. Interacts (via UBA domain) with UBA52 and (via ubiquitin-like domain) with PSMD3 and PSMD4. Interacts with HERPUD1. Interacts with MAP1LC3A/B/C in the presence of UBQLN4. Interacts (via ubiquitin-like domain) with EPS15 (via UIM domains) and both the ubiquitinated and non-ubiquitinated forms can interact with EPS15. Interacts (via ubiquitin-like domain) with EPS15L1, HGS (via UIM domain) and STAM2 (via UIM domain). Interacts with BCL2L10/BCL-B; in the cytoplasm. Post-translationally, degraded during both macroautophagy and during chaperone-mediated autophagy (CMA). In terms of processing, phosphorylated. Ubiquitinated.

It localises to the nucleus. The protein localises to the cytoplasm. The protein resides in the endoplasmic reticulum. Its subcellular location is the cytoplasmic vesicle. It is found in the autophagosome. It localises to the cell membrane. Its function is as follows. Plays an important role in the regulation of different protein degradation mechanisms and pathways including ubiquitin-proteasome system (UPS), autophagy and endoplasmic reticulum-associated protein degradation (ERAD) pathway. Mediates the proteasomal targeting of misfolded or accumulated proteins for degradation by binding (via UBA domain) to their polyubiquitin chains and by interacting (via ubiquitin-like domain) with the subunits of the proteasome. Plays a role in the ERAD pathway via its interaction with ER-localized proteins UBXN4, VCP and HERPUD1 and may form a link between the polyubiquitinated ERAD substrates and the proteasome. Plays a role in unfolded protein response (UPR) by attenuating the induction of UPR-inducible genes, DDTI3/CHOP, HSPA5 and PDIA2 during ER stress. Involved in the regulation of macroautophagy and autophagosome formation; required for maturation of autophagy-related protein LC3 from the cytosolic form LC3-I to the membrane-bound form LC3-II and may assist in the maturation of autophagosomes to autolysosomes by mediating autophagosome-lysosome fusion. Negatively regulates the TICAM1/TRIF-dependent toll-like receptor signaling pathway by decreasing the abundance of TICAM1 via the autophagic pathway. Promotes the ubiquitination and lysosomal degradation of ORAI1, consequently down-regulating the ORAI1-mediated Ca2+ mobilization. Suppresses the maturation and proteasomal degradation of amyloid beta A4 protein (A4) by stimulating the lysine 63 (K63)-linked polyubiquitination. Delays the maturation of A4 by sequestering it in the Golgi apparatus and preventing its transport to the cell surface for subsequent processing. Ubiquitinates BCL2L10 and thereby stabilizes protein abundance. This Pongo abelii (Sumatran orangutan) protein is Ubiquilin-1 (UBQLN1).